Consider the following 363-residue polypeptide: Cobalt-precorrin-5B C(1)-methyltransferase (363 aa).

The protein belongs to the CbiD family.

The catalysed reaction is Co-precorrin-5B + S-adenosyl-L-methionine = Co-precorrin-6A + S-adenosyl-L-homocysteine. The protein operates within cofactor biosynthesis; adenosylcobalamin biosynthesis; cob(II)yrinate a,c-diamide from sirohydrochlorin (anaerobic route): step 6/10. Its function is as follows. Catalyzes the methylation of C-1 in cobalt-precorrin-5B to form cobalt-precorrin-6A. The chain is Cobalt-precorrin-5B C(1)-methyltransferase from Burkholderia pseudomallei (strain K96243).